The primary structure comprises 103 residues: ATP-dependent Clp protease adapter protein ClpS (103 aa).

This sequence belongs to the ClpS family. As to quaternary structure, binds to the N-terminal domain of the chaperone ClpA.

Functionally, involved in the modulation of the specificity of the ClpAP-mediated ATP-dependent protein degradation. The protein is ATP-dependent Clp protease adapter protein ClpS of Neisseria meningitidis serogroup A / serotype 4A (strain DSM 15465 / Z2491).